Reading from the N-terminus, the 257-residue chain is Phosphonates import ATP-binding protein PhnC (257 aa).

Residues 4–248 (IEFKDVSKVY…VFNHIYGRSI (245 aa)) enclose the ABC transporter domain.

Belongs to the ABC transporter superfamily. Phosphonates importer (TC 3.A.1.9.1) family. As to quaternary structure, the complex is composed of two ATP-binding proteins (PhnC), two transmembrane proteins (PhnE) and a solute-binding protein (PhnD).

The protein localises to the cell membrane. The catalysed reaction is phosphonate(out) + ATP + H2O = phosphonate(in) + ADP + phosphate + H(+). Its function is as follows. Part of the ABC transporter complex PhnCDE involved in phosphonates import. Responsible for energy coupling to the transport system. The protein is Phosphonates import ATP-binding protein PhnC of Staphylococcus epidermidis (strain ATCC 35984 / DSM 28319 / BCRC 17069 / CCUG 31568 / BM 3577 / RP62A).